The primary structure comprises 1509 residues: MVKQDPRDKSSYSPNLSIPINNQEEPTLNNNNNNNNNNNNNNNNNNNNNNNNNNNNNNNKNNNNNNIKHKDEENDFEDSIYQIAKEHEGEEDDEYFPIPLDELMPNHENDELTKKIKQTRPEDKTGLYVYCRNATYTVKHRENKKVKIKLLDDVSFFLRPKQMTLILGTPGCGKSTIFQMLAGQLKDKHFEGELLFNGHPINHKNHHRDISYVTQDDIHVPTLTVKETFRFALDCLGKKELTREEKQVSVDNCMKLLGLKHAENTLVGDNFIRGISGGQKKRVTIGVGVIKGSNLLLMDEPTSGLDSSTSFEILSDVKKFVTYGYSPALITLLQPSVQLTSLFDNLMIMSKGKICYFGPMNRALGYFKKLGFACPSHNNPAEFFQEVVDAPERYSFIHPPKCKTSDDFVKAYRESDIYLELMEKMDANKDGIVDDNKPKVLVDSTAKELGMYPHGIGYQTKICLKRGFIMISRNYYNFATRVFKGIFFGLLLGTLYWRIGHNQSGGMERFGLLFFIMTTIIFSSFAAVNSFFGERKVFYSQKALHYYKTGAYFISSIICDIPAGLIEVAFFGPIVYWLANLRPVFIRFVYFMILLFITDNLSLSFAKMCAAISPTIEIANVTASVILSIWLLFSGFTAPKNDIGGWWIWLYYISPYTWIFQGLSINEFTYQAYGCKDSELIPPRTPQNLLPYPEGFGGNQVCQYTSGEQIMDAFGINNPDYFKWIVYAILGAYIVFFYSVCFFALKYLNFEDKKSKLAVKKLKKKKKVIVCKEDEEPNCKVTTEALERVSDDNDDNADISNYDDDTVIDMKSPLTSPNYNNNNNLSGSGNNIKRRKVKTPSTLSPMVNSPLTNLSPMVNTPSKNGNHSKQKPISTSQKDISSETGSYLQFKKLCYAVDVKADDPDNPKKKKSQRLQLLTDIDGYVKPGQMLALMGPSGAGKSTLLDVLAQRKTGGHITGEILINGKPPSEFTNRIRAYVEQMDVLPPTQTVREAIAFSARCRLPPEVTKEEREIFVDKIVEVLSLSSIKDLKIGVLGNGLSVSQRKRVNIGVELASNPEILFLDEPTSGLDSGDAFKVIDVVNKIAKVMNRTVICTVHQPSAAIFEFFDQLLLLKKGGETIYFGPLGNQSSVILDYCDKLGMHIKPHINPADFVMTLADEGKMVEGPNGEQEHLDAKKAYFESNICKKEYEIMEGQLIPDDFVVKTYDSRFASSWMTQFRALCMRSWLSRLRRPAIFVSNCLRSILLAVLLGTLFVRMDYEQKDARSRVSLLFFSFLFAGMVAIGNIPTTVLERGVFYREVTAGFYHSTAYMISYVLTSYPFILSTGILYIIPTFWIAGLDSGRHSSKFWYCLFIFIITYIMYDAFALCLAVCLPNEVMASTICGIGLSLATLFGGFVIARPNYPSAYYWCHYLDWLRYPLEASCTNEFTGLTFVCTNNKGAVPIPIIENGVQIAIKYYCPITNGDDFMLTYGFHKFMRYIDIAAIFGYIFIFVGLSFWGFKKVRWLNR.

The span at methionine 1–serine 10 shows a compositional bias: basic and acidic residues. The segment at methionine 1–lysine 70 is disordered. Polar residues predominate over residues serine 11–leucine 28. A compositionally biased stretch (low complexity) spans asparagine 29–asparagine 66. Positions valine 129–serine 376 constitute an ABC transporter 1 domain. Glycine 168–serine 175 contacts ATP. In terms of domain architecture, ABC transmembrane type-2 1 spans serine 472–leucine 748. 7 helical membrane passes run asparagine 477–tryptophan 497, leucine 512–phenylalanine 532, isoleucine 557–tryptophan 577, proline 583–leucine 603, isoleucine 616–phenylalanine 636, isoleucine 643–leucine 663, and isoleucine 725–leucine 745. The segment covering proline 813–asparagine 831 has biased composition (low complexity). The disordered stretch occupies residues proline 813–serine 881. Positions threonine 839–serine 881 are enriched in polar residues. In terms of domain architecture, ABC transporter 2 spans leucine 888 to glycine 1141. ATP is bound at residue glycine 935–serine 942. The region spanning leucine 1231–valine 1504 is the ABC transmembrane type-2 2 domain. The next 6 helical transmembrane spans lie at isoleucine 1236–valine 1256, leucine 1271–valine 1291, tyrosine 1320–leucine 1340, cysteine 1352–valine 1372, methionine 1379–isoleucine 1399, and isoleucine 1481–phenylalanine 1501.

It belongs to the ABC transporter superfamily. ABCG family. PDR (TC 3.A.1.205) subfamily.

The protein resides in the membrane. This chain is ABC transporter G family member 5 (abcG5), found in Dictyostelium discoideum (Social amoeba).